Here is a 347-residue protein sequence, read N- to C-terminus: Large ribosomal subunit protein uL3 (347 aa).

The disordered stretch occupies residues Arg325–Gln347.

This sequence belongs to the universal ribosomal protein uL3 family. As to quaternary structure, part of the 50S ribosomal subunit. Forms a cluster with proteins L14 and L24e.

One of the primary rRNA binding proteins, it binds directly near the 3'-end of the 23S rRNA, where it nucleates assembly of the 50S subunit. In Thermococcus onnurineus (strain NA1), this protein is Large ribosomal subunit protein uL3.